The sequence spans 312 residues: Ornithine carbamoyltransferase (312 aa).

Residues 57-60 (STRT), glutamine 84, arginine 108, and 135-138 (HPCQ) each bind carbamoyl phosphate. Residues asparagine 166, aspartate 226, and 230-231 (SM) contribute to the L-ornithine site. Residues 265–266 (CL) and arginine 293 contribute to the carbamoyl phosphate site.

This sequence belongs to the aspartate/ornithine carbamoyltransferase superfamily. OTCase family.

The protein localises to the cytoplasm. It carries out the reaction carbamoyl phosphate + L-ornithine = L-citrulline + phosphate + H(+). It participates in amino-acid biosynthesis; L-arginine biosynthesis; L-arginine from L-ornithine and carbamoyl phosphate: step 1/3. In terms of biological role, reversibly catalyzes the transfer of the carbamoyl group from carbamoyl phosphate (CP) to the N(epsilon) atom of ornithine (ORN) to produce L-citrulline. The sequence is that of Ornithine carbamoyltransferase from Brucella suis biovar 1 (strain 1330).